The primary structure comprises 67 residues: Preprofallaxidin-4 (67 aa).

An N-terminal signal peptide occupies residues 1-22; sequence MASLKKFLFLVLFLGMVSLSIC. Residues 23-46 constitute a propeptide that is removed on maturation; it reads DKEKREGENEEEEEEHEEESEEKR. The interval 24–48 is disordered; that stretch reads KEKREGENEEEEEEHEEESEEKRGL. A compositionally biased stretch (acidic residues) spans 30–42; it reads ENEEEEEEHEEES.

The protein belongs to the frog skin active peptide (FSAP) family. Dermaseptin subfamily. Expressed by the skin glands.

It is found in the secreted. This Litoria fallax (Eastern dwarf tree frog) protein is Preprofallaxidin-4.